A 118-amino-acid polypeptide reads, in one-letter code: Putative membrane protein insertion efficiency factor (118 aa).

This sequence belongs to the UPF0161 family.

The protein localises to the cell inner membrane. Its function is as follows. Could be involved in insertion of integral membrane proteins into the membrane. In Helicobacter pylori (strain HPAG1), this protein is Putative membrane protein insertion efficiency factor.